A 236-amino-acid polypeptide reads, in one-letter code: 2-C-methyl-D-erythritol 4-phosphate cytidylyltransferase (236 aa).

It belongs to the IspD/TarI cytidylyltransferase family. IspD subfamily. As to quaternary structure, homodimer.

It carries out the reaction 2-C-methyl-D-erythritol 4-phosphate + CTP + H(+) = 4-CDP-2-C-methyl-D-erythritol + diphosphate. It participates in isoprenoid biosynthesis; isopentenyl diphosphate biosynthesis via DXP pathway; isopentenyl diphosphate from 1-deoxy-D-xylulose 5-phosphate: step 2/6. Functionally, catalyzes the formation of 4-diphosphocytidyl-2-C-methyl-D-erythritol from CTP and 2-C-methyl-D-erythritol 4-phosphate (MEP). The sequence is that of 2-C-methyl-D-erythritol 4-phosphate cytidylyltransferase from Cronobacter sakazakii (strain ATCC BAA-894) (Enterobacter sakazakii).